The sequence spans 184 residues: Shikimate kinase (184 aa).

Position 18–23 (18–23 (GAGKTT)) interacts with ATP. Residue Thr-22 participates in Mg(2+) binding. Positions 40, 64, and 86 each coordinate substrate. Arg-124 contacts ATP. Substrate is bound at residue Arg-143. Gln-160 lines the ATP pocket.

The protein belongs to the shikimate kinase family. Monomer. It depends on Mg(2+) as a cofactor.

The protein localises to the cytoplasm. The catalysed reaction is shikimate + ATP = 3-phosphoshikimate + ADP + H(+). The protein operates within metabolic intermediate biosynthesis; chorismate biosynthesis; chorismate from D-erythrose 4-phosphate and phosphoenolpyruvate: step 5/7. Its function is as follows. Catalyzes the specific phosphorylation of the 3-hydroxyl group of shikimic acid using ATP as a cosubstrate. In Chromobacterium violaceum (strain ATCC 12472 / DSM 30191 / JCM 1249 / CCUG 213 / NBRC 12614 / NCIMB 9131 / NCTC 9757 / MK), this protein is Shikimate kinase.